The chain runs to 521 residues: Formate--tetrahydrofolate ligase (521 aa).

Belongs to the formate--tetrahydrofolate ligase family.

It catalyses the reaction (6S)-5,6,7,8-tetrahydrofolate + formate + ATP = (6R)-10-formyltetrahydrofolate + ADP + phosphate. It participates in one-carbon metabolism; tetrahydrofolate interconversion. This chain is Formate--tetrahydrofolate ligase, found in Ureaplasma parvum serovar 3 (strain ATCC 700970).